Here is a 5875-residue protein sequence, read N- to C-terminus: Probable E3 ubiquitin-protein ligase DDB_G0283893 (5875 aa).

Disordered stretches follow at residues D17 to E64, N164 to N185, D232 to S276, P302 to G342, T642 to I693, S716 to A740, I1081 to P1101, D1291 to T1367, Q1806 to P1851, K1952 to V1982, E2008 to E2036, K2109 to G2203, D2893 to S2930, T3083 to N3119, and L3195 to N3214. Low complexity predominate over residues N18–N52. The span at D237–S249 shows a compositional bias: basic and acidic residues. 3 stretches are compositionally biased toward low complexity: residues K250 to S276, T317 to P333, and T642 to T656. Residues N657–T669 show a composition bias toward polar residues. The segment covering P670–I693 has biased composition (low complexity). The span at S716–N725 shows a compositional bias: polar residues. Residues T728–A740 are compositionally biased toward low complexity. Residues F1297 to E1330 show a composition bias toward acidic residues. The stretch at D1300 to E1328 forms a coiled coil. Composition is skewed to low complexity over residues T1347–T1363 and S1838–P1851. Basic residues predominate over residues G1963–S1977. The UBR-type zinc finger occupies K2042–P2113. Low complexity-rich tracts occupy residues P2118–N2168 and S2178–G2203. The segment covering D2893 to T2903 has biased composition (acidic residues). The span at V2908–A2917 shows a compositional bias: low complexity. Residues S3201 to D3211 show a composition bias toward low complexity. The segment at E3226–P3280 adopts a ZZ-type zinc-finger fold. Zn(2+) is bound by residues C3231, C3234, C3246, C3249, C3255, C3258, H3266, and H3270. Disordered stretches follow at residues K3282–S3312, L3326–N3359, and S3754–I3776. Composition is skewed to low complexity over residues Q3295 to D3307 and N3327 to T3358. Residues E3313–N3332 enclose the UIM domain. A compositionally biased stretch (polar residues) spans S3754 to E3763. Residues S3764–N3774 are compositionally biased toward low complexity. The stretch at I4118–I4146 forms a coiled coil. Residues N4182–S4222 show a composition bias toward low complexity. Disordered stretches follow at residues N4182 to I4237, F4295 to P4323, and K4616 to D4671. Positions G4223–V4236 are enriched in gly residues. Low complexity predominate over residues Q4308–Q4317. The stretch at Q4585 to L4618 forms a coiled coil. Low complexity-rich tracts occupy residues S4619–S4635 and S4645–S4659. A UBR4 E3 catalytic module region spans residues P5357–V5870. The HemiRING-type zinc-finger motif lies at G5476–V5620. Positions 5479, 5482, 5554, and 5557 each coordinate Zn(2+). A UZI domain is found at P5623 to V5870. The stretch at Q5819 to E5846 forms a coiled coil.

It belongs to the UBR4 family.

Its pathway is protein modification; protein ubiquitination. Its function is as follows. Probable E3 ubiquitin-protein ligase. The protein is Probable E3 ubiquitin-protein ligase DDB_G0283893 of Dictyostelium discoideum (Social amoeba).